The sequence spans 214 residues: 3,4-dihydroxy-2-butanone 4-phosphate synthase (214 aa).

D-ribulose 5-phosphate is bound by residues 37–38, Asp-42, 150–154, and Glu-174; these read RE and RRGHT. Residue Glu-38 participates in Mg(2+) binding. A Mg(2+)-binding site is contributed by His-153.

Belongs to the DHBP synthase family. As to quaternary structure, homodimer. Mg(2+) serves as cofactor. Requires Mn(2+) as cofactor.

The enzyme catalyses D-ribulose 5-phosphate = (2S)-2-hydroxy-3-oxobutyl phosphate + formate + H(+). It participates in cofactor biosynthesis; riboflavin biosynthesis; 2-hydroxy-3-oxobutyl phosphate from D-ribulose 5-phosphate: step 1/1. Catalyzes the conversion of D-ribulose 5-phosphate to formate and 3,4-dihydroxy-2-butanone 4-phosphate. This Histophilus somni (strain 2336) (Haemophilus somnus) protein is 3,4-dihydroxy-2-butanone 4-phosphate synthase.